Consider the following 282-residue polypeptide: 2-dehydro-3-deoxyphosphooctonate aldolase (282 aa).

The protein belongs to the KdsA family.

The protein resides in the cytoplasm. It carries out the reaction D-arabinose 5-phosphate + phosphoenolpyruvate + H2O = 3-deoxy-alpha-D-manno-2-octulosonate-8-phosphate + phosphate. Its pathway is carbohydrate biosynthesis; 3-deoxy-D-manno-octulosonate biosynthesis; 3-deoxy-D-manno-octulosonate from D-ribulose 5-phosphate: step 2/3. The protein operates within bacterial outer membrane biogenesis; lipopolysaccharide biosynthesis. The sequence is that of 2-dehydro-3-deoxyphosphooctonate aldolase from Shewanella amazonensis (strain ATCC BAA-1098 / SB2B).